A 287-amino-acid polypeptide reads, in one-letter code: Phosphoribosylaminoimidazole-succinocarboxamide synthase (287 aa).

It belongs to the SAICAR synthetase family.

The enzyme catalyses 5-amino-1-(5-phospho-D-ribosyl)imidazole-4-carboxylate + L-aspartate + ATP = (2S)-2-[5-amino-1-(5-phospho-beta-D-ribosyl)imidazole-4-carboxamido]succinate + ADP + phosphate + 2 H(+). The protein operates within purine metabolism; IMP biosynthesis via de novo pathway; 5-amino-1-(5-phospho-D-ribosyl)imidazole-4-carboxamide from 5-amino-1-(5-phospho-D-ribosyl)imidazole-4-carboxylate: step 1/2. The chain is Phosphoribosylaminoimidazole-succinocarboxamide synthase from Neisseria meningitidis serogroup A / serotype 4A (strain DSM 15465 / Z2491).